We begin with the raw amino-acid sequence, 420 residues long: MATVVREAFENHVKLVESRNSPGHVLASSEASFFVADLNDIVRKWAAWKKALPDVTPFFAVKSSYDRRLIQTLATCGAGFDCASVEEIELILSLGIGAERIVFTHPCKPVSSLGLCRKLGITLITFDNECELRKLHHHYPEAQTVLRVFADDPTNADPLGTKFGAAREDIDGLVRLVKELNMKLAGASFHAAPSVAVDAAAYVRGIRDAAEVFARARRVGLNPTVLDIGGGYTDSTFQQIAGAVRPAIAECFKSQVVEGRLRILAEPGTLFSCSPFYLAVKVVARRRNAAAFGNEPATRLYINDGIYSNFMMRFIVNMTFSPVAVIRKGVWYDQTEQTMRREACSLWGRSCDSNDCINRDCRLDPEVGVGDWLVFKDMGAYTTVCNTTFNGFTSSNHTIYIEPTQVDKAQSTFEQLELAI.

At K62 the chain carries N6-(pyridoxal phosphate)lysine. Pyridoxal 5'-phosphate-binding positions include S194, G231, and 266-269 (EPGT). 315–316 (IV) provides a ligand contact to substrate. C351 functions as the Proton donor; shared with dimeric partner in the catalytic mechanism. C351 carries the S-nitrosocysteine modification. A substrate-binding site is contributed by D352. Residue Y381 coordinates pyridoxal 5'-phosphate.

It belongs to the Orn/Lys/Arg decarboxylase class-II family. Homodimer. It depends on pyridoxal 5'-phosphate as a cofactor.

It participates in alkaloid biosynthesis. Amino acid decarboxylase; part of the gene cluster that mediates the biosynthesis of loline alkaloids, potent insecticidal agents composed of a pyrrolizidine ring system and an uncommon ether bridge linking carbons 2 and 7. Lolines are structurally differentiated by the various modifications of the L-amino group and include norloline, loline, N-methylloline, N-acetylloline, N-acetylnorloline, and N-formylloline. The first committed step is the condensation of O-acetyl-L-homoserine (derived from L-aspartic acid) and L-proline, probably catalyzed by the gamma-type pyridoxal 5'-phosphate(PLP)-dependent enzyme lolC, to give the diamino diacid, NACPP. Ensuing cyclization, decarboxylation, and acetylation steps yield 1-exo-acetamidopyrrolizidine (AcAP). LolO is required for installation of the ether bridge upon the pathway intermediate, 1-exo-acetamidopyrrolizidine (AcAP). In sequential 2-oxoglutarate- and O(2)-consuming steps, lolO removes hydrogens from C2 and C7 of AcAP to form both carbon-oxygen bonds in N-acetylnorloline (NANL), the precursor to all other lolines. The enzymes lolD, lolE, lolF and lolT have also been proposed to be involved in the ether-bridge installation. Further processing of the exocyclic moiety of NANL by fungal N-acetamidase (LolN), methyltransferase (LolM), and cytochrome P450 (LolP) enzymes, with occasional involvement of a plant acetyltransferase, generates the other known lolines. LolN transforms NANL to norlonine which is monomethylated and dimethylated to respectively lonine and N-methyllonine (NML) by lolM. LolP catalyzes hydroxylation of the methyl group in N-methylloline (NML) and further oxygenation to N-formylloline (NFL). A plant acetyltransferase is responsible for the acetylation of loline to form N-acetylloline (NAL). LolA might interact with aspartate kinase to prevent feedback inhibition of its activity by these end products and thereby promote production of L-homoserine from L-aspartate. This is Amino acid decarboxylase lolD1 from Epichloe uncinata (Endophyte fungus).